The chain runs to 190 residues: Imidazoleglycerol-phosphate dehydratase (190 aa).

The protein belongs to the imidazoleglycerol-phosphate dehydratase family.

Its subcellular location is the cytoplasm. The catalysed reaction is D-erythro-1-(imidazol-4-yl)glycerol 3-phosphate = 3-(imidazol-4-yl)-2-oxopropyl phosphate + H2O. It functions in the pathway amino-acid biosynthesis; L-histidine biosynthesis; L-histidine from 5-phospho-alpha-D-ribose 1-diphosphate: step 6/9. This chain is Imidazoleglycerol-phosphate dehydratase, found in Methanococcus maripaludis (strain DSM 14266 / JCM 13030 / NBRC 101832 / S2 / LL).